The primary structure comprises 390 residues: Aspartate carbamoyltransferase, chloroplastic (390 aa).

A chloroplast-targeting transit peptide spans 1–68 (MSIASSLTSA…NLTRNVGPVR (68 aa)). Arg-136 and Thr-137 together coordinate carbamoyl phosphate. UMP-binding residues include Arg-136 and Thr-137. L-aspartate is bound at residue Lys-166. 3 residues coordinate carbamoyl phosphate: Arg-187, His-215, and Gln-218. The UMP site is built by Arg-187 and His-215. Residues Arg-248 and Arg-310 each coordinate UMP. L-aspartate is bound by residues Arg-248 and Arg-310. Leu-350 and Pro-351 together coordinate carbamoyl phosphate.

Belongs to the aspartate/ornithine carbamoyltransferase superfamily. ATCase family. In terms of assembly, homotrimer.

Its subcellular location is the plastid. The protein resides in the chloroplast. It catalyses the reaction carbamoyl phosphate + L-aspartate = N-carbamoyl-L-aspartate + phosphate + H(+). It participates in pyrimidine metabolism; UMP biosynthesis via de novo pathway; (S)-dihydroorotate from bicarbonate: step 2/3. Its activity is regulated as follows. Feedback inhibited by UMP. Functionally, catalyzes the condensation of carbamoyl phosphate and aspartate to form carbamoyl aspartate and inorganic phosphate, the committed step in the de novo pyrimidine nucleotide biosynthesis pathway. In Arabidopsis thaliana (Mouse-ear cress), this protein is Aspartate carbamoyltransferase, chloroplastic (PYRB).